Here is a 139-residue protein sequence, read N- to C-terminus: Small ribosomal subunit protein uS12 (139 aa).

A 3-methylthioaspartic acid modification is found at aspartate 102.

This sequence belongs to the universal ribosomal protein uS12 family. In terms of assembly, part of the 30S ribosomal subunit. Contacts proteins S8 and S17. May interact with IF1 in the 30S initiation complex.

Its function is as follows. With S4 and S5 plays an important role in translational accuracy. Interacts with and stabilizes bases of the 16S rRNA that are involved in tRNA selection in the A site and with the mRNA backbone. Located at the interface of the 30S and 50S subunits, it traverses the body of the 30S subunit contacting proteins on the other side and probably holding the rRNA structure together. The combined cluster of proteins S8, S12 and S17 appears to hold together the shoulder and platform of the 30S subunit. The protein is Small ribosomal subunit protein uS12 of Phytoplasma australiense.